The chain runs to 122 residues: MIQVQTMLKVADNTGAKKVMCIKVLGGSKRKYANIGDVIVASVKDATPGGVVKKGDVVRCVIVRSKRGIRRPDGSYIRFDENAAVLIREDKNPRGTRIFGPVARELRDKEYMKILSLAPEVL.

Belongs to the universal ribosomal protein uL14 family. As to quaternary structure, part of the 50S ribosomal subunit. Forms a cluster with proteins L3 and L19. In the 70S ribosome, L14 and L19 interact and together make contacts with the 16S rRNA in bridges B5 and B8.

In terms of biological role, binds to 23S rRNA. Forms part of two intersubunit bridges in the 70S ribosome. The sequence is that of Large ribosomal subunit protein uL14 from Acetivibrio thermocellus (strain ATCC 27405 / DSM 1237 / JCM 9322 / NBRC 103400 / NCIMB 10682 / NRRL B-4536 / VPI 7372) (Clostridium thermocellum).